The following is a 331-amino-acid chain: Ribose-phosphate pyrophosphokinase (331 aa).

ATP is bound at residue 55–57 (DGE). The Mg(2+) site is built by histidine 148 and aspartate 187. The active site involves lysine 211. D-ribose 5-phosphate-binding positions include arginine 213, aspartate 237, and 241–245 (DTAGT).

This sequence belongs to the ribose-phosphate pyrophosphokinase family. Class I subfamily. In terms of assembly, homohexamer. The cofactor is Mg(2+).

The protein resides in the cytoplasm. It carries out the reaction D-ribose 5-phosphate + ATP = 5-phospho-alpha-D-ribose 1-diphosphate + AMP + H(+). It functions in the pathway metabolic intermediate biosynthesis; 5-phospho-alpha-D-ribose 1-diphosphate biosynthesis; 5-phospho-alpha-D-ribose 1-diphosphate from D-ribose 5-phosphate (route I): step 1/1. Its function is as follows. Involved in the biosynthesis of the central metabolite phospho-alpha-D-ribosyl-1-pyrophosphate (PRPP) via the transfer of pyrophosphoryl group from ATP to 1-hydroxyl of ribose-5-phosphate (Rib-5-P). The polypeptide is Ribose-phosphate pyrophosphokinase (Synechococcus elongatus (strain ATCC 33912 / PCC 7942 / FACHB-805) (Anacystis nidulans R2)).